Reading from the N-terminus, the 120-residue chain is T-cell receptor beta chain V region PHDS203 (120 aa).

The N-terminal stretch at 1-11 (VVLCFLGTGLV) is a signal peptide. Positions 12–106 (DMKVTQMSRY…TSVYFCAQGA (95 aa)) are v segment. Cysteines 34 and 102 form a disulfide. The segment at 107 to 120 (PEQYFGPGTRLTVL) is j segment.

This chain is T-cell receptor beta chain V region PHDS203, found in Mus musculus (Mouse).